The chain runs to 418 residues: Deubiquitinase and deneddylase Dub1 (418 aa).

Over residues 1-10 (MLSPTNSISK) the composition is skewed to polar residues. Residues 1–23 (MLSPTNSISKTVPAPPQDSSKPV) form a disordered region. A helical transmembrane segment spans residues 40-60 (TALAVLLVVVTLGLILLFYSF). Residues 75-145 (STKEHPTISI…LPPKAPKPVK (71 aa)) form a disordered region. Over residues 86–141 (EPLPSPPLAVPRPSTPPPPVISRPSTPPAPTPAISPPSTPSAPKPSTPPPLPPKAP) the composition is skewed to pro residues. Residues histidine 288, aspartate 305, and cysteine 358 contribute to the active site.

This sequence belongs to the peptidase C48 family.

The protein localises to the secreted. The protein resides in the host cell. It is found in the membrane. Its function is as follows. Effector proteins function to alter host cell physiology and promote bacterial survival in host tissues. This protease possesses deubiquitinating and deneddylating activities. The polypeptide is Deubiquitinase and deneddylase Dub1 (cdu1) (Chlamydia trachomatis serovar A (strain ATCC VR-571B / DSM 19440 / HAR-13)).